A 263-amino-acid polypeptide reads, in one-letter code: Proteasome subunit alpha type-1 (263 aa).

M1 is modified (N-acetylmethionine). Residue S110 is modified to Phosphoserine; alternate. The O-linked (GlcNAc) serine; alternate glycan is linked to S110. Residue K115 forms a Glycyl lysine isopeptide (Lys-Gly) (interchain with G-Cter in ubiquitin) linkage. Residue S177 is modified to Phosphoserine. K208 participates in a covalent cross-link: Glycyl lysine isopeptide (Lys-Gly) (interchain with G-Cter in ubiquitin). Positions 232 to 263 (FLEGLEERPQRKAQPTQPADEPAEKADEPMEH) are disordered. Positions 253–263 (PAEKADEPMEH) are enriched in basic and acidic residues.

It belongs to the peptidase T1A family. As to quaternary structure, the 26S proteasome consists of a 20S proteasome core and two 19S regulatory subunits. The 20S proteasome core is a barrel-shaped complex made of 28 subunits that are arranged in four stacked rings. The two outer rings are each formed by seven alpha subunits, and the two inner rings are formed by seven beta subunits. The proteolytic activity is exerted by three beta-subunits PSMB5, PSMB6 and PSMB7. Interacts with NOTCH3. Interacts with ZFAND1.

The protein localises to the cytoplasm. It localises to the nucleus. In terms of biological role, component of the 20S core proteasome complex involved in the proteolytic degradation of most intracellular proteins. This complex plays numerous essential roles within the cell by associating with different regulatory particles. Associated with two 19S regulatory particles, forms the 26S proteasome and thus participates in the ATP-dependent degradation of ubiquitinated proteins. The 26S proteasome plays a key role in the maintenance of protein homeostasis by removing misfolded or damaged proteins that could impair cellular functions, and by removing proteins whose functions are no longer required. Associated with the PA200 or PA28, the 20S proteasome mediates ubiquitin-independent protein degradation. This type of proteolysis is required in several pathways including spermatogenesis (20S-PA200 complex) or generation of a subset of MHC class I-presented antigenic peptides (20S-PA28 complex). This is Proteasome subunit alpha type-1 (PSMA1) from Bos taurus (Bovine).